A 395-amino-acid polypeptide reads, in one-letter code: E3 ubiquitin-protein ligase NHLRC1 (395 aa).

Residues cysteine 26–arginine 72 form an RING-type zinc finger. NHL repeat units lie at residues alanine 113–glycine 157, alanine 161–phenylalanine 204, glycine 205–aspartate 245, glutamate 248–serine 300, methionine 301–proline 349, and glutamate 350–aspartate 393.

Interacts with AGL. Interacts (via the NHL repeats) with EPM2A/laforin. Forms a complex with EPM2A/laforin and HSP70. Interacts with PRDM8. In terms of tissue distribution, expressed in brain, cerebellum, spinal cord, medulla, heart, liver, skeletal muscle and pancreas.

It is found in the endoplasmic reticulum. The protein resides in the nucleus. It catalyses the reaction S-ubiquitinyl-[E2 ubiquitin-conjugating enzyme]-L-cysteine + [acceptor protein]-L-lysine = [E2 ubiquitin-conjugating enzyme]-L-cysteine + N(6)-ubiquitinyl-[acceptor protein]-L-lysine.. The protein operates within protein modification; protein ubiquitination. Its function is as follows. E3 ubiquitin-protein ligase. Together with the phosphatase EPM2A/laforin, appears to be involved in the clearance of toxic polyglucosan and protein aggregates via multiple pathways. In complex with EPM2A/laforin and HSP70, suppresses the cellular toxicity of misfolded proteins by promoting their degradation through the ubiquitin-proteasome system (UPS). Ubiquitinates the glycogen-targeting protein phosphatase subunits PPP1R3C/PTG and PPP1R3D in a laforin-dependent manner and targets them for proteasome-dependent degradation, thus decreasing glycogen accumulation. Polyubiquitinates EPM2A/laforin and ubiquitinates AGL and targets them for proteasome-dependent degradation. Also promotes proteasome-independent protein degradation through the macroautophagy pathway. The polypeptide is E3 ubiquitin-protein ligase NHLRC1 (NHLRC1) (Homo sapiens (Human)).